A 344-amino-acid chain; its full sequence is DNA-directed RNA polymerase subunit alpha (344 aa).

Residues 1-238 are alpha N-terminal domain (alpha-NTD); the sequence is MKVIKTAPLI…KQLGVFGERP (238 aa). Positions 254–344 are alpha C-terminal domain (alpha-CTD); it reads AKDLSAKIES…EKLEDKGGND (91 aa).

The protein belongs to the RNA polymerase alpha chain family. In terms of assembly, homodimer. The RNAP catalytic core consists of 2 alpha, 1 beta, 1 beta' and 1 omega subunit. When a sigma factor is associated with the core the holoenzyme is formed, which can initiate transcription.

It catalyses the reaction RNA(n) + a ribonucleoside 5'-triphosphate = RNA(n+1) + diphosphate. In terms of biological role, DNA-dependent RNA polymerase catalyzes the transcription of DNA into RNA using the four ribonucleoside triphosphates as substrates. The protein is DNA-directed RNA polymerase subunit alpha of Helicobacter pylori (strain ATCC 700392 / 26695) (Campylobacter pylori).